The following is a 548-amino-acid chain: Chaperonin GroEL (548 aa).

Residues 30-33, Lys-51, 87-91, Gly-415, 479-481, and Asp-495 each bind ATP; these read TLGP, DGTTT, and NAA.

This sequence belongs to the chaperonin (HSP60) family. Forms a cylinder of 14 subunits composed of two heptameric rings stacked back-to-back. Interacts with the co-chaperonin GroES.

The protein localises to the cytoplasm. It catalyses the reaction ATP + H2O + a folded polypeptide = ADP + phosphate + an unfolded polypeptide.. In terms of biological role, together with its co-chaperonin GroES, plays an essential role in assisting protein folding. The GroEL-GroES system forms a nano-cage that allows encapsulation of the non-native substrate proteins and provides a physical environment optimized to promote and accelerate protein folding. The sequence is that of Chaperonin GroEL from Serratia proteamaculans (strain 568).